The following is a 326-amino-acid chain: MGEGGESLSGAASRFRADWQALDPSGRVCLAVSGGPDSLALMLLMQEVAPRDFCVATVDHGLRAESAAEAAMVAGLCEMRGIAYHTLRLDLAGGSAVQERARKARYAALADLARRDGLSAVVTAHHADDQAETLVMRLNRGAGLRGLAGMRAASSVPGAGEVRLLRPLLGWRRAELVALVEDAGLAPVLDPSNHDHRYERVRIRDVMASTKALLPSGFAASASHLAEADAALEWAVERLWLDIGMSAEGSTWNPPEDLPRVLALRLLERVVMHLGGTVPRGPDLVRWLATLRAGGVATLAGVKGDARSGAWRFSRAPEHRSDRRPD.

33 to 38 (SGGPDS) is a binding site for ATP.

It belongs to the tRNA(Ile)-lysidine synthase family.

Its subcellular location is the cytoplasm. The catalysed reaction is cytidine(34) in tRNA(Ile2) + L-lysine + ATP = lysidine(34) in tRNA(Ile2) + AMP + diphosphate + H(+). In terms of biological role, ligates lysine onto the cytidine present at position 34 of the AUA codon-specific tRNA(Ile) that contains the anticodon CAU, in an ATP-dependent manner. Cytidine is converted to lysidine, thus changing the amino acid specificity of the tRNA from methionine to isoleucine. This chain is tRNA(Ile)-lysidine synthase, found in Novosphingobium aromaticivorans (strain ATCC 700278 / DSM 12444 / CCUG 56034 / CIP 105152 / NBRC 16084 / F199).